Reading from the N-terminus, the 188-residue chain is Putative 3-methyladenine DNA glycosylase (188 aa).

It belongs to the DNA glycosylase MPG family.

The polypeptide is Putative 3-methyladenine DNA glycosylase (Ehrlichia ruminantium (Cowdria ruminantium)).